Here is a 266-residue protein sequence, read N- to C-terminus: Uracil-DNA glycosylase (266 aa).

The interval 1 to 25 (MTRRADPAQATLFDDDEPAGAPTAT) is disordered. The active-site Proton acceptor is the Asp97.

Belongs to the uracil-DNA glycosylase (UDG) superfamily. UNG family.

Its subcellular location is the cytoplasm. The catalysed reaction is Hydrolyzes single-stranded DNA or mismatched double-stranded DNA and polynucleotides, releasing free uracil.. Functionally, excises uracil residues from the DNA which can arise as a result of misincorporation of dUMP residues by DNA polymerase or due to deamination of cytosine. The chain is Uracil-DNA glycosylase from Ralstonia nicotianae (strain ATCC BAA-1114 / GMI1000) (Ralstonia solanacearum).